The sequence spans 200 residues: Elongation factor Ts (200 aa).

Positions threonine 82–valine 85 are involved in Mg(2+) ion dislocation from EF-Tu.

It belongs to the EF-Ts family.

Its subcellular location is the cytoplasm. Functionally, associates with the EF-Tu.GDP complex and induces the exchange of GDP to GTP. It remains bound to the aminoacyl-tRNA.EF-Tu.GTP complex up to the GTP hydrolysis stage on the ribosome. In Solidesulfovibrio magneticus (strain ATCC 700980 / DSM 13731 / RS-1) (Desulfovibrio magneticus), this protein is Elongation factor Ts.